The primary structure comprises 505 residues: MESGPAVCCQDPRAELVDRVAAINVAHLEEADEGPEPARNGVDPPPRARAASVIPGSASRPTPVRPSLSARKFSLQERPAGSCLGAQVGPYSTGPASHISPRSWRRPTIESHRVAISDTEDCVQLNQYKLQSEIGKGAYGVVRLAYNESEDRHYAMKVLSKKKLLKQYGFPRRPPPRGSQATQGGPAKQLLPLERVYQEIAILKKLDHVNVVKLIEVLDDPAEDNLYLVFDLLRKGPVMEVPCDKPFPEEQARLYLRDIILGLEYLHCQKIVHRDIKPSNLLLGDDGHVKIADFGVSNQFEGNDAQLSSTAGTPAFMAPEAISDSGQSFSGKALDVWATGVTLYCFVYGKCPFIDDYILTLHRKIKNEAVVFPEEPEVSEDLKDLILRMLDKNPETRIGVSDIKLHPWVTKHGEEPLPSEEEHCSVVEVTEEEVKNSVRLIPSWTTVILVKSMLRKRSFGNPFEPQARREERSMSAPGSLLMKEGCGEGCKSPELPGVQEDEAAS.

Residues Leu-28–Pro-66 form a disordered region. Phosphoserine occurs at positions 67 and 74. Residue Arg-78 is modified to Asymmetric dimethylarginine. The interval Leu-84–Arg-105 is disordered. Ser-100 carries the phosphoserine modification. Phosphothreonine is present on Thr-108. The 282-residue stretch at Tyr-128–Val-409 folds into the Protein kinase domain. ATP-binding positions include Ile-134–Val-142 and Lys-157. The tract at residues Gln-167–Gln-189 is RP domain. Residue Asp-275 is the Proton acceptor of the active site. The interval Lys-435–Leu-440 is autoinhibitory domain. Residues Val-438 to Phe-463 form a calmodulin-binding region. A phosphoserine mark is found at Ser-458, Ser-475, and Ser-492. Residues Gly-460 to Ser-505 are disordered.

This sequence belongs to the protein kinase superfamily. Ser/Thr protein kinase family. In terms of assembly, interacts with CAMK4 and calmodulin. Post-translationally, appears to be autophosphorylated in a Ca(2+)/calmodulin-dependent manner. Phosphorylated at multiple sites by PRCAKA/PKA. Phosphorylation of Ser-458 is blocked upon binding to Ca(2+)/calmodulin. In vitro, phosphorylated by CAMK1 and CAMK4. Widely expressed. Differentially expressed in various brain regions.

It localises to the cytoplasm. Its subcellular location is the nucleus. It carries out the reaction L-seryl-[protein] + ATP = O-phospho-L-seryl-[protein] + ADP + H(+). The catalysed reaction is L-threonyl-[protein] + ATP = O-phospho-L-threonyl-[protein] + ADP + H(+). With respect to regulation, activated by Ca(2+)/calmodulin. Binding of calmodulin may relieve intrasteric autoinhibition. Partially inhibited upon phosphorylation by PRCAKA/PKA. May be regulated through phosphorylation by CAMK1 and CAMK4. Calcium/calmodulin-dependent protein kinase that belongs to a proposed calcium-triggered signaling cascade involved in a number of cellular processes. Phosphorylates CAMK1, CAMK1D, CAMK1G and CAMK4. Involved in regulating cell apoptosis. Promotes cell survival by phosphorylating AKT1/PKB that inhibits pro-apoptotic BAD/Bcl2-antagonist of cell death. The polypeptide is Calcium/calmodulin-dependent protein kinase kinase 1 (Camkk1) (Mus musculus (Mouse)).